A 214-amino-acid polypeptide reads, in one-letter code: Neurogenin-3 (214 aa).

Residues 1–14 (MTPQPSGAPTVQVT) show a composition bias toward polar residues. Residues 1–98 (MTPQPSGAPT…NDRERNRMHN (98 aa)) form a disordered region. The span at 15 to 26 (RETERSFPRASE) shows a compositional bias: basic and acidic residues. 2 stretches are compositionally biased toward basic residues: residues 57 to 70 (APRKLRARRGGRSR) and 79 to 88 (KQRRSRRKKA). In terms of domain architecture, bHLH spans 83–135 (SRRKKANDRERNRMHNLNSALDALRGVLPTFPDDAKLTKIETLRFAHNYIWAL).

In terms of assembly, efficient DNA binding requires dimerization with another bHLH protein. Interacts with ATOH8.

It is found in the nucleus. In terms of biological role, acts as a transcriptional regulator. Together with NKX2-2, initiates transcriptional activation of NEUROD1. Involved in neurogenesis. Also required for the specification of a common precursor of the 4 pancreatic endocrine cell types. In Homo sapiens (Human), this protein is Neurogenin-3 (NEUROG3).